The chain runs to 283 residues: Protein/nucleic acid deglycase HchA (283 aa).

Zn(2+) is bound by residues histidine 86, glutamate 91, and histidine 123. Cysteine 185 acts as the Nucleophile in catalysis.

Belongs to the peptidase C56 family. HchA subfamily. In terms of assembly, homodimer.

It is found in the cytoplasm. The catalysed reaction is N(omega)-(1-hydroxy-2-oxopropyl)-L-arginyl-[protein] + H2O = lactate + L-arginyl-[protein] + H(+). The enzyme catalyses N(6)-(1-hydroxy-2-oxopropyl)-L-lysyl-[protein] + H2O = lactate + L-lysyl-[protein] + H(+). It catalyses the reaction S-(1-hydroxy-2-oxopropyl)-L-cysteinyl-[protein] + H2O = lactate + L-cysteinyl-[protein] + H(+). It carries out the reaction N(omega)-(1-hydroxy-2-oxoethyl)-L-arginyl-[protein] + H2O = L-arginyl-[protein] + glycolate + H(+). The catalysed reaction is N(6)-(1-hydroxy-2-oxoethyl)-L-lysyl-[protein] + H2O = glycolate + L-lysyl-[protein] + H(+). The enzyme catalyses S-(1-hydroxy-2-oxoethyl)-L-cysteinyl-[protein] + H2O = glycolate + L-cysteinyl-[protein] + H(+). It catalyses the reaction N(2)-(1-hydroxy-2-oxopropyl)-dGTP + H2O = lactate + dGTP + H(+). It carries out the reaction N(2)-(1-hydroxy-2-oxopropyl)-GTP + H2O = lactate + GTP + H(+). The catalysed reaction is N(2)-(1-hydroxy-2-oxopropyl)-GDP + H2O = lactate + GDP + H(+). The enzyme catalyses N(2)-(1-hydroxy-2-oxopropyl)-GMP + H2O = lactate + GMP + H(+). It catalyses the reaction N(2)-(1-hydroxy-2-oxoethyl)-dGTP + H2O = dGTP + glycolate + H(+). It carries out the reaction N(2)-(1-hydroxy-2-oxoethyl)-GTP + H2O = glycolate + GTP + H(+). The catalysed reaction is N(2)-(1-hydroxy-2-oxoethyl)-GDP + H2O = glycolate + GDP + H(+). The enzyme catalyses N(2)-(1-hydroxy-2-oxoethyl)-GMP + H2O = glycolate + GMP + H(+). It catalyses the reaction an N(2)-(1-hydroxy-2-oxopropyl)-guanosine in RNA + H2O = a guanosine in RNA + lactate + H(+). It carries out the reaction an N(2)-(1-hydroxy-2-oxopropyl)-2'-deoxyguanosine in DNA + H2O = a 2'-deoxyguanosine in DNA + lactate + H(+). The catalysed reaction is an N(2)-(1-hydroxy-2-oxoethyl)-guanosine in RNA + H2O = a guanosine in RNA + glycolate + H(+). The enzyme catalyses an N(2)-(1-hydroxy-2-oxoethyl)-2'-deoxyguanosine in DNA + H2O = a 2'-deoxyguanosine in DNA + glycolate + H(+). In terms of biological role, protein and nucleotide deglycase that catalyzes the deglycation of the Maillard adducts formed between amino groups of proteins or nucleotides and reactive carbonyl groups of glyoxals. Thus, functions as a protein deglycase that repairs methylglyoxal- and glyoxal-glycated proteins, and releases repaired proteins and lactate or glycolate, respectively. Deglycates cysteine, arginine and lysine residues in proteins, and thus reactivates these proteins by reversing glycation by glyoxals. Acts on early glycation intermediates (hemithioacetals and aminocarbinols), preventing the formation of Schiff bases and advanced glycation endproducts (AGE). Also functions as a nucleotide deglycase able to repair glycated guanine in the free nucleotide pool (GTP, GDP, GMP, dGTP) and in DNA and RNA. Is thus involved in a major nucleotide repair system named guanine glycation repair (GG repair), dedicated to reversing methylglyoxal and glyoxal damage via nucleotide sanitization and direct nucleic acid repair. Plays an important role in protecting cells from carbonyl stress. This chain is Protein/nucleic acid deglycase HchA, found in Escherichia coli O45:K1 (strain S88 / ExPEC).